We begin with the raw amino-acid sequence, 421 residues long: Histidine--tRNA ligase (421 aa).

It belongs to the class-II aminoacyl-tRNA synthetase family. Homodimer.

Its subcellular location is the cytoplasm. The enzyme catalyses tRNA(His) + L-histidine + ATP = L-histidyl-tRNA(His) + AMP + diphosphate + H(+). The chain is Histidine--tRNA ligase from Nitrosomonas eutropha (strain DSM 101675 / C91 / Nm57).